The primary structure comprises 313 residues: Ribonuclease Z (313 aa).

Positions 62, 64, 66, 67, 142, 212, and 270 each coordinate Zn(2+). D66 (proton acceptor) is an active-site residue.

The protein belongs to the RNase Z family. Homodimer. Zn(2+) serves as cofactor.

It catalyses the reaction Endonucleolytic cleavage of RNA, removing extra 3' nucleotides from tRNA precursor, generating 3' termini of tRNAs. A 3'-hydroxy group is left at the tRNA terminus and a 5'-phosphoryl group is left at the trailer molecule.. In terms of biological role, zinc phosphodiesterase, which displays some tRNA 3'-processing endonuclease activity. Probably involved in tRNA maturation, by removing a 3'-trailer from precursor tRNA. The sequence is that of Ribonuclease Z from Cytophaga hutchinsonii (strain ATCC 33406 / DSM 1761 / CIP 103989 / NBRC 15051 / NCIMB 9469 / D465).